The following is a 314-amino-acid chain: Putative S-adenosyl-L-methionine-dependent methyltransferase MAP_0256 (314 aa).

S-adenosyl-L-methionine-binding positions include Asp-132 and 161–162; that span reads DL.

It belongs to the UPF0677 family.

In terms of biological role, exhibits S-adenosyl-L-methionine-dependent methyltransferase activity. The sequence is that of Putative S-adenosyl-L-methionine-dependent methyltransferase MAP_0256 from Mycolicibacterium paratuberculosis (strain ATCC BAA-968 / K-10) (Mycobacterium paratuberculosis).